Reading from the N-terminus, the 327-residue chain is Methionyl-tRNA formyltransferase (327 aa).

(6S)-5,6,7,8-tetrahydrofolate is bound at residue 122–125 (SLLP).

Belongs to the Fmt family.

It catalyses the reaction L-methionyl-tRNA(fMet) + (6R)-10-formyltetrahydrofolate = N-formyl-L-methionyl-tRNA(fMet) + (6S)-5,6,7,8-tetrahydrofolate + H(+). In terms of biological role, attaches a formyl group to the free amino group of methionyl-tRNA(fMet). The formyl group appears to play a dual role in the initiator identity of N-formylmethionyl-tRNA by promoting its recognition by IF2 and preventing the misappropriation of this tRNA by the elongation apparatus. In Ralstonia pickettii (strain 12J), this protein is Methionyl-tRNA formyltransferase.